Here is a 160-residue protein sequence, read N- to C-terminus: MMERFEKIEMKIPAKAEYVAIIRLTMAGVANRMGFAYDDIEDMKIAISEACTNIVQHAYKEDVGEIAIVFGLYEDRLEIMVADNGVSFDFNNLRSKVGPYDISKPVEHLPENGLGLYLINTLMDDIQIMHDEGMTVLMTKYIQREQVENDGNPISTYNSY.

It belongs to the anti-sigma-factor family.

It catalyses the reaction L-seryl-[protein] + ATP = O-phospho-L-seryl-[protein] + ADP + H(+). The enzyme catalyses L-threonyl-[protein] + ATP = O-phospho-L-threonyl-[protein] + ADP + H(+). Functionally, negative regulator of sigma-B activity. Phosphorylates and inactivates its specific antagonist protein, RsbV. Upon phosphorylation of RsbV, RsbW is released and binds to sigma-B, thereby blocking its ability to form an RNA polymerase holoenzyme (E-sigma-B). The chain is Serine-protein kinase RsbW from Bacillus cereus (strain Q1).